A 146-amino-acid polypeptide reads, in one-letter code: Hemoglobin subunit beta (146 aa).

V1 is modified (N-acetylvaline). Residues 2-146 enclose the Globin domain; sequence HLTGEEKSAV…VANALAHKYH (145 aa). T12 is modified (phosphothreonine). A Phosphoserine modification is found at S44. An N6-acetyllysine modification is found at K59. H63 contacts heme b. Position 82 is an N6-acetyllysine (K82). H92 contacts heme b. An S-nitrosocysteine modification is found at C93. K144 bears the N6-acetyllysine mark.

The protein belongs to the globin family. In terms of assembly, heterotetramer of two alpha chains and two beta chains. In terms of tissue distribution, red blood cells.

Functionally, involved in oxygen transport from the lung to the various peripheral tissues. The chain is Hemoglobin subunit beta (HBB) from Nycticebus coucang (Slow loris).